A 620-amino-acid chain; its full sequence is Acetylcholinesterase 1 (620 aa).

The first 31 residues, 1 to 31, serve as a signal peptide directing secretion; it reads MRYSLLFFIFLPCVITAVDLIHLHDGSPLFG. A glycan (N-linked (GlcNAc...) asparagine) is linked at asparagine 74. Cysteine 82 and cysteine 109 are oxidised to a cystine. Catalysis depends on serine 216, which acts as the Acyl-ester intermediate. Cysteine 270 and cysteine 286 are oxidised to a cystine. Residue asparagine 272 is glycosylated (N-linked (GlcNAc...) asparagine). Catalysis depends on charge relay system residues glutamate 346 and histidine 468. Cysteines 430 and 558 form a disulfide. N-linked (GlcNAc...) asparagine glycosylation is found at asparagine 486 and asparagine 536.

The protein belongs to the type-B carboxylesterase/lipase family. In terms of assembly, oligomer composed of disulfide-linked homodimers.

The protein resides in the synapse. Its subcellular location is the secreted. The protein localises to the cell membrane. The catalysed reaction is acetylcholine + H2O = choline + acetate + H(+). Functionally, rapidly hydrolyzes choline released into the synapse. This chain is Acetylcholinesterase 1 (ace-1), found in Caenorhabditis briggsae.